The primary structure comprises 94 residues: Integration host factor subunit beta (94 aa).

The protein belongs to the bacterial histone-like protein family. In terms of assembly, heterodimer of an alpha and a beta chain.

In terms of biological role, this protein is one of the two subunits of integration host factor, a specific DNA-binding protein that functions in genetic recombination as well as in transcriptional and translational control. This Yersinia enterocolitica serotype O:8 / biotype 1B (strain NCTC 13174 / 8081) protein is Integration host factor subunit beta.